Reading from the N-terminus, the 88-residue chain is MARGLLHLRVGGRRPRGLCCWKKGSRSRPQERVLGSTSGKNWRRVTERSEGSKFIGIYSVRECKSSDCRRRNSRPSVVSLLRGSCEEL.

As to expression, expressed in a wide variety of tissues.

This is an uncharacterized protein from Homo sapiens (Human).